The primary structure comprises 671 residues: Probable potassium transport system protein Kup (671 aa).

The tract at residues 1–43 is disordered; that stretch reads MSQIPSPNDPASTGAAPSSAAVPAGPSATPAPSPTAGFSLPGH. Over residues 10-37 the composition is skewed to low complexity; sequence PASTGAAPSSAAVPAGPSATPAPSPTAG. The next 12 membrane-spanning stretches (helical) occupy residues 52 to 72, 92 to 112, 147 to 167, 181 to 201, 209 to 229, 255 to 275, 291 to 311, 323 to 343, 381 to 401, 407 to 427, 441 to 461, and 465 to 485; these read LAAL…TSPL, VLGV…FKYM, LMLG…TPAI, PAME…LFLF, VGAV…VLGV, GWHG…GEAL, WLGL…ALLL, LLAP…AAIV, IYLP…VLGF, LASA…LLFH, AWPL…ANVV, and DGGW…STWK.

It belongs to the HAK/KUP transporter (TC 2.A.72) family.

The protein resides in the cell inner membrane. It catalyses the reaction K(+)(in) + H(+)(in) = K(+)(out) + H(+)(out). Transport of potassium into the cell. Likely operates as a K(+):H(+) symporter. This Anaeromyxobacter sp. (strain K) protein is Probable potassium transport system protein Kup.